The sequence spans 157 residues: Small ribosomal subunit protein uS7 (157 aa).

This sequence belongs to the universal ribosomal protein uS7 family. As to quaternary structure, part of the 30S ribosomal subunit. Contacts proteins S9 and S11.

One of the primary rRNA binding proteins, it binds directly to 16S rRNA where it nucleates assembly of the head domain of the 30S subunit. Is located at the subunit interface close to the decoding center, probably blocks exit of the E-site tRNA. The sequence is that of Small ribosomal subunit protein uS7 from Roseiflexus sp. (strain RS-1).